A 63-amino-acid polypeptide reads, in one-letter code: Large ribosomal subunit protein uL29 (63 aa).

The protein belongs to the universal ribosomal protein uL29 family.

This chain is Large ribosomal subunit protein uL29, found in Bordetella avium (strain 197N).